A 118-amino-acid chain; its full sequence is REPTOR-binding partner (118 aa).

The segment covering 1-20 has biased composition (polar residues); it reads MADMEIQSNKMSITEETQVQ. The interval 1-53 is disordered; sequence MADMEIQSNKMSITEETQVQTRKECGKRGRKPGRKTSTEKLDMKAKLERSRQS. Positions 36–53 are enriched in basic and acidic residues; it reads TSTEKLDMKAKLERSRQS. Residues 40-77 are basic motif; it reads KLDMKAKLERSRQSARECRARKKLRYQYLEELVADREK. The bZIP domain maps to 40–90; the sequence is KLDMKAKLERSRQSARECRARKKLRYQYLEELVADREKAVVALRTELERLI. Positions 82–89 are leucine-zipper; sequence LRTELERL.

It belongs to the bZIP family. ATF subfamily. Homodimer. Interacts (via C-terminus) with REPTOR (via C-terminus).

It localises to the nucleus. The protein resides in the chromosome. In terms of biological role, transcriptional regulator that acts in the TORC1 signaling pathway to regulate energy homeostasis and promote survival during nutrient deprivation. Interacts with REPTOR to form a transcriptional activator complex that functions downstream of TORC1 to up-regulate the expression of most target genes induced by TORC1 inhibition. In the complex, acts to enhance the binding of the transcriptional activator REPTOR to the regulatory sequences of target genes. Under normal conditions TORC1 is active, inhibiting the formation of the REPTOR/REPTOR-BP complex by phosphorylating REPTOR and mediates its cytoplasmic retention by forming a docking site for 14-3-3 proteins. Upon TORC1 inhibition resulting from nutrient stress, REPTOR is recruited into the nucleus where it interacts with REPTOR-BP and together they maintain organismal metabolism by activating the expression of target stress response genes including those involved in glycogenesis and triglyceride biosynthesis. The complex also appears to negatively regulate some aspects of TORC1-dependent larval growth. The sequence is that of REPTOR-binding partner from Drosophila melanogaster (Fruit fly).